The primary structure comprises 64 residues: Large ribosomal subunit protein uL29 (64 aa).

Belongs to the universal ribosomal protein uL29 family.

The sequence is that of Large ribosomal subunit protein uL29 from Chloroherpeton thalassium (strain ATCC 35110 / GB-78).